The chain runs to 176 residues: Flavodoxin 1 (176 aa).

Positions 4-165 constitute a Flavodoxin-like domain; the sequence is HGIFFGSDTG…RVEKWVKQIS (162 aa).

This sequence belongs to the flavodoxin family. The cofactor is FMN.

Functionally, low-potential electron donor to a number of redox enzymes. The sequence is that of Flavodoxin 1 (fldA) from Shigella flexneri.